We begin with the raw amino-acid sequence, 354 residues long: Nicotinate-nucleotide--dimethylbenzimidazole phosphoribosyltransferase (354 aa).

Glutamate 319 functions as the Proton acceptor in the catalytic mechanism.

It belongs to the CobT family.

It carries out the reaction 5,6-dimethylbenzimidazole + nicotinate beta-D-ribonucleotide = alpha-ribazole 5'-phosphate + nicotinate + H(+). Its pathway is nucleoside biosynthesis; alpha-ribazole biosynthesis; alpha-ribazole from 5,6-dimethylbenzimidazole: step 1/2. Its function is as follows. Catalyzes the synthesis of alpha-ribazole-5'-phosphate from nicotinate mononucleotide (NAMN) and 5,6-dimethylbenzimidazole (DMB). This is Nicotinate-nucleotide--dimethylbenzimidazole phosphoribosyltransferase from Chlorobium chlorochromatii (strain CaD3).